The following is a 201-amino-acid chain: MTKDFEPFVYPPANLIAGVDEVGRGPLVGAVVTAAVILDPNNPIVGLTDSKKLSEKKRNVLFDEIKEKAVAWSLGRCEPEEIDELNILQATMVAMQRAVADLSVQPDFVLIDGNKIPQLPMAAQAVVKGDLRVAEISAASIIAKVTRDREMEVLDAQFPQYGFAKHKGYPTKVHVEALELHGAIEQHRKSFKPVKRILGIE.

The RNase H type-2 domain occupies N14 to E201. A divalent metal cation is bound by residues D20, E21, and D112.

This sequence belongs to the RNase HII family. The cofactor is Mn(2+). Requires Mg(2+) as cofactor.

Its subcellular location is the cytoplasm. The enzyme catalyses Endonucleolytic cleavage to 5'-phosphomonoester.. Endonuclease that specifically degrades the RNA of RNA-DNA hybrids. The protein is Ribonuclease HII of Photobacterium profundum (strain SS9).